A 373-amino-acid chain; its full sequence is tRNA-specific 2-thiouridylase MnmA (373 aa).

Residues 12–19 (GMSGGVDS) and Met38 contribute to the ATP site. The segment at 98–100 (NPD) is interaction with target base in tRNA. The Nucleophile role is filled by Cys103. Cys103 and Cys200 are joined by a disulfide. Gly127 provides a ligand contact to ATP. Positions 150–152 (KDQ) are interaction with tRNA. The active-site Cysteine persulfide intermediate is Cys200. The interaction with tRNA stretch occupies residues 312 to 313 (RY).

Belongs to the MnmA/TRMU family.

The protein localises to the cytoplasm. The catalysed reaction is S-sulfanyl-L-cysteinyl-[protein] + uridine(34) in tRNA + AH2 + ATP = 2-thiouridine(34) in tRNA + L-cysteinyl-[protein] + A + AMP + diphosphate + H(+). Its function is as follows. Catalyzes the 2-thiolation of uridine at the wobble position (U34) of tRNA, leading to the formation of s(2)U34. The chain is tRNA-specific 2-thiouridylase MnmA from Streptococcus thermophilus (strain ATCC BAA-491 / LMD-9).